The primary structure comprises 151 residues: MTTKPSDSVSWFQVLQRGQHYMKTWPADKRLAPVFPENRVATATRFGIRFMPPLAIFTLTWQIALGGQLGPAIATALFACGLPLQGLWWLGKRAITPLPPTLLQWFHEVRNKLAEAGQAVAPVEQTPTYQSLADVLKRAFKQLDKTFLDDL.

The next 2 membrane-spanning stretches (helical) occupy residues 46–66 (FGIRFMPPLAIFTLTWQIALG) and 69–89 (LGPAIATALFACGLPLQGLWW).

It belongs to the UPF0208 family.

The protein resides in the cell inner membrane. The polypeptide is UPF0208 membrane protein YE1335 (Yersinia enterocolitica serotype O:8 / biotype 1B (strain NCTC 13174 / 8081)).